A 219-amino-acid chain; its full sequence is MRFSGMDMKGINMLFAAIPSICASSPKKISIYNEEMIVARCFIGFLILSWKSLGKTFKETLDGRIESIQESLQQFFNPNEVILEESNEQQRLLNLWISLRICSTVKVVESLPAARCAPKCEKTVQALLCRNLNVKSATLLNATSSRRIRLQDDIVTGFHFSVSERLVSGSTTLVEASTVEQIREAFLLEPRDLIREGFIVLRKVRVGGIPGTCGDGVGL.

Residues 29 to 49 (ISIYNEEMIVARCFIGFLILS) traverse the membrane as a helical segment.

It belongs to the ATPase protein MI25 family. F-type ATPases have 2 components, CF(1) - the catalytic core - and CF(0) - the membrane proton channel. CF(1) has five subunits: alpha(3), beta(3), gamma(1), delta(1), epsilon(1). CF(0) has three main subunits: a, b and c.

It localises to the mitochondrion membrane. In terms of biological role, this is one of the chains of the nonenzymatic component (CF(0) subunit) of the mitochondrial ATPase complex. This chain is ATP synthase protein MI25, found in Zea mays (Maize).